A 117-amino-acid polypeptide reads, in one-letter code: MQNIPPQVQAMLGQLESYQQQLQLVVQQKQKVQLELTEAKKALDEIESLPDDAVVYKTVGTLIVKTTKDKAVAELKEKIETLEVRLNALERQEKKLNEKLKELTAQIQSALRPPTAG.

The protein belongs to the prefoldin subunit beta family. In terms of assembly, heterohexamer of two alpha and four beta subunits.

It is found in the cytoplasm. Molecular chaperone capable of stabilizing a range of proteins. Seems to fulfill an ATP-independent, HSP70-like function in archaeal de novo protein folding. This is Prefoldin subunit beta from Thermococcus kodakarensis (strain ATCC BAA-918 / JCM 12380 / KOD1) (Pyrococcus kodakaraensis (strain KOD1)).